A 412-amino-acid chain; its full sequence is uncharacterized protein (412 aa).

The 215-residue stretch at Glu50–Asp264 folds into the Radical SAM core domain. Residues Cys64, Cys68, and Cys71 each contribute to the [4Fe-4S] cluster site.

It belongs to the radical SAM superfamily. Anaerobic sulfatase-maturating enzyme family. The cofactor is [4Fe-4S] cluster.

This is an uncharacterized protein from Archaeoglobus fulgidus (strain ATCC 49558 / DSM 4304 / JCM 9628 / NBRC 100126 / VC-16).